The sequence spans 189 residues: Interferon alpha-12 (189 aa).

Positions 1 to 23 are cleaved as a signal peptide; sequence MARLCAFLMTLLVMSYWSTCSLG. Disulfide bonds link cysteine 24-cysteine 122 and cysteine 52-cysteine 162. A glycan (N-linked (GlcNAc...) asparagine) is linked at asparagine 101.

It belongs to the alpha/beta interferon family.

Its subcellular location is the secreted. Functionally, produced by macrophages, IFN-alpha have antiviral activities. Interferon stimulates the production of two enzymes: a protein kinase and an oligoadenylate synthetase. This Mus musculus (Mouse) protein is Interferon alpha-12 (Ifna12).